Reading from the N-terminus, the 322-residue chain is Ferredoxin--NADP reductase (322 aa).

FAD-binding residues include Asp34, Gln42, Tyr47, Val87, Phe120, Asp279, and Thr320.

It belongs to the ferredoxin--NADP reductase type 2 family. As to quaternary structure, homodimer. FAD is required as a cofactor.

The catalysed reaction is 2 reduced [2Fe-2S]-[ferredoxin] + NADP(+) + H(+) = 2 oxidized [2Fe-2S]-[ferredoxin] + NADPH. The polypeptide is Ferredoxin--NADP reductase (Streptococcus sanguinis (strain SK36)).